The primary structure comprises 406 residues: MSGRSRGRKSSRAKGRGKGRARARVRAAAEDAWHDEKPPQSPRLGEDSAAAQVQAGAAQGGAEPAELREEAACRLPLDCGLALRARAADERGLAAPDPDLERARSLAERLTSDTSFVGTVGALAKLRRGSRIGNRRVPGRKAPDTRSATGRGPQATVSGKPKMASAGLCAAAPVGEEKKMTEKHAGAGSPATVGSMDTLETVQLKLETMNAQADRAYLRLSRKFGQLRLHHLERRNLLIQSIPGFWGQAFQNHPQLSAFLNTKDKEVLSYLNRLEVEELGLARLGYKIKFYFGRNPYFQNKVLIKEYGCGPSGQVVSRSAPIQWLPGHDLQSLSKENPENNGSFFGWFSNHSSIESDKIVEIINEDLWPNPLQYYLISEEARGEKGKEERPGPAKLSPAPAVRQPN.

Over residues 1–25 (MSGRSRGRKSSRAKGRGKGRARARV) the composition is skewed to basic residues. 3 disordered regions span residues 1 to 67 (MSGR…PAEL), 132 to 164 (IGNR…PKMA), and 382 to 406 (RGEK…RQPN). Basic and acidic residues predominate over residues 27-38 (AAAEDAWHDEKP). Positions 49–62 (AAAQVQAGAAQGGA) are enriched in low complexity. A compositionally biased stretch (basic and acidic residues) spans 382-392 (RGEKGKEERPG).

Belongs to the nucleosome assembly protein (NAP) family. Interacts with USP7.

Its function is as follows. Involved in modulation of cell growth and cellular response to gamma radiation probably via regulation of the Akt signaling pathway. Involved in regulation of p53/TP53. Suppresses p53/TP53 protein levels and promotes its ubiquitination; the function is dependent on USP7 and independent on MDM2. Proposed to displace p53/TP53 from interaction with USP7. This Mus musculus (Mouse) protein is Testis-specific Y-encoded-like protein 5 (Tspyl5).